A 56-amino-acid polypeptide reads, in one-letter code: Large ribosomal subunit protein eL37 (56 aa).

4 residues coordinate Zn(2+): Cys19, Cys22, Cys34, and Cys37. The C4-type zinc finger occupies 19–37; it reads CRRCGSVSLNIHTKQCTSC.

It belongs to the eukaryotic ribosomal protein eL37 family. Requires Zn(2+) as cofactor.

Its function is as follows. Binds to the 23S rRNA. The protein is Large ribosomal subunit protein eL37 of Methanococcoides burtonii (strain DSM 6242 / NBRC 107633 / OCM 468 / ACE-M).